The sequence spans 209 residues: Protein TIC 20-v, chloroplastic (209 aa).

The transit peptide at 1-49 (MAIISQFFAPLPSLTGTLTLTGRSFLPLNLDTQFPKPRLSRDRAATLVL) directs the protein to the chloroplast. 4 helical membrane-spanning segments follow: residues 63–83 (IISA…GKFI), 103–123 (AFKS…FVVV), 132–152 (VRFN…PDLL), and 173–193 (TVFL…LFGL).

It belongs to the Tic20 family. Part of the Tic complex. Expressed in leaves, siliques and roots.

It localises to the plastid. It is found in the chloroplast inner membrane. Functionally, may be involved in protein precursor import into chloroplasts. Not redundant with TIC20-I, TIC20-II or TIC20-IV. The polypeptide is Protein TIC 20-v, chloroplastic (TIC20-V) (Arabidopsis thaliana (Mouse-ear cress)).